The sequence spans 23 residues: Cytochrome c oxidase subunit 7A-liver, mitochondrial (23 aa).

It belongs to the cytochrome c oxidase VIIa family. As to quaternary structure, component of the cytochrome c oxidase (complex IV, CIV), a multisubunit enzyme composed of 14 subunits. The complex is composed of a catalytic core of 3 subunits MT-CO1, MT-CO2 and MT-CO3, encoded in the mitochondrial DNA, and 11 supernumerary subunits COX4I, COX5A, COX5B, COX6A, COX6B, COX6C, COX7A, COX7B, COX7C, COX8 and NDUFA4, which are encoded in the nuclear genome. The complex exists as a monomer or a dimer and forms supercomplexes (SCs) in the inner mitochondrial membrane with NADH-ubiquinone oxidoreductase (complex I, CI) and ubiquinol-cytochrome c oxidoreductase (cytochrome b-c1 complex, complex III, CIII), resulting in different assemblies (supercomplex SCI(1)III(2)IV(1) and megacomplex MCI(2)III(2)IV(2)).

The protein localises to the mitochondrion inner membrane. Its pathway is energy metabolism; oxidative phosphorylation. Its function is as follows. Component of the cytochrome c oxidase, the last enzyme in the mitochondrial electron transport chain which drives oxidative phosphorylation. The respiratory chain contains 3 multisubunit complexes succinate dehydrogenase (complex II, CII), ubiquinol-cytochrome c oxidoreductase (cytochrome b-c1 complex, complex III, CIII) and cytochrome c oxidase (complex IV, CIV), that cooperate to transfer electrons derived from NADH and succinate to molecular oxygen, creating an electrochemical gradient over the inner membrane that drives transmembrane transport and the ATP synthase. Cytochrome c oxidase is the component of the respiratory chain that catalyzes the reduction of oxygen to water. Electrons originating from reduced cytochrome c in the intermembrane space (IMS) are transferred via the dinuclear copper A center (CU(A)) of subunit 2 and heme A of subunit 1 to the active site in subunit 1, a binuclear center (BNC) formed by heme A3 and copper B (CU(B)). The BNC reduces molecular oxygen to 2 water molecules using 4 electrons from cytochrome c in the IMS and 4 protons from the mitochondrial matrix. This Oncorhynchus mykiss (Rainbow trout) protein is Cytochrome c oxidase subunit 7A-liver, mitochondrial.